The following is a 392-amino-acid chain: Pyruvate synthase subunit PorA (392 aa).

In terms of assembly, heterotetramer of one alpha, one beta, one delta and one gamma chain.

The enzyme catalyses 2 oxidized [2Fe-2S]-[ferredoxin] + pyruvate + CoA = 2 reduced [2Fe-2S]-[ferredoxin] + acetyl-CoA + CO2 + H(+). The polypeptide is Pyruvate synthase subunit PorA (porA) (Thermotoga maritima (strain ATCC 43589 / DSM 3109 / JCM 10099 / NBRC 100826 / MSB8)).